We begin with the raw amino-acid sequence, 541 residues long: Arginine--tRNA ligase (541 aa).

Positions 119–129 match the 'HIGH' region motif; it reads ANPTGPLHIGH.

It belongs to the class-I aminoacyl-tRNA synthetase family. Monomer.

It is found in the cytoplasm. The catalysed reaction is tRNA(Arg) + L-arginine + ATP = L-arginyl-tRNA(Arg) + AMP + diphosphate. This Helicobacter pylori (strain P12) protein is Arginine--tRNA ligase.